A 225-amino-acid chain; its full sequence is MRTIDKLIAPHLKLAPVLVKRAPTLTLAFDDRRKSRLAATLDSGEEVALLLPRGTVLRDGDVLVADDGGLVRVIAAPEAVLYVRAKDALTLTRAAYHLGNRHTPVEVGADYLKLEFDPVLADMLKRIGATVDQVSMPFQPESGAYGGGHKHGHDETFAEDYALAQQVFGEHHGHEHSHDHEHGHSHAAHEHSHGHDHTHGHDHDHGDHVHDESCGHGHHHHHAHR.

Residues 171 to 215 (HHGHEHSHDHEHGHSHAAHEHSHGHDHTHGHDHDHGDHVHDESCG) show a composition bias toward basic and acidic residues. The tract at residues 171 to 225 (HHGHEHSHDHEHGHSHAAHEHSHGHDHTHGHDHDHGDHVHDESCGHGHHHHHAHR) is disordered. Residues 216-225 (HGHHHHHAHR) show a composition bias toward basic residues.

This sequence belongs to the UreE family.

It localises to the cytoplasm. Functionally, involved in urease metallocenter assembly. Binds nickel. Probably functions as a nickel donor during metallocenter assembly. The chain is Urease accessory protein UreE from Paraburkholderia xenovorans (strain LB400).